The primary structure comprises 401 residues: MSALITHDRSTPVTGSLLPYVETPAPAPLQTQQVAGELKDKNGGVSSQGVQLPAPLAVVASQVTEGQQQEVTKLLESVTRGAAGSQLISNYVSVLTKFTLASPDTFEIELGKLVSNLEEVRKDIKIADIQRLHEQNMKKIEENQEKIKETEENAKQVKKSGIASKIFGWLSAIASVIVGAIMVASGVGAVAGAMMVASGVIGMANMAVKQAAEDGLISQEAMKILGPILTAIEVALTVVSTVMTFGGSALKCLANIGAKLGANTASLAAKGAEFSAKVAQISTGISNTVGSAVTKLGGSFAGLTMSHAIRTGSQATQVAVGVGSGITQTINNKKQADLQHNNADLALNKADMAALQSIIDRLKEELSHLSESHQQVMELIFQMINAKGDMLHNLAGRPHTV.

Positions 129–160 (IQRLHEQNMKKIEENQEKIKETEENAKQVKKS) form a coiled coil. 2 helical membrane-spanning segments follow: residues 176–196 (VIVG…AMMV) and 224–244 (ILGP…TVMT). Residues 345-379 (LALNKADMAALQSIIDRLKEELSHLSESHQQVMEL) adopt a coiled-coil conformation.

It belongs to the SctE/SipB/YopB family. In terms of assembly, the core secretion machinery of the T3SS is composed of approximately 20 different proteins, including cytoplasmic components, a base, an export apparatus and a needle. This subunit is involved in the formation of a pore, called the translocon, in host membrane. Interacts with YopD/SctB. Together with YopD/SctB, forms a multimeric integral membrane complex.

It localises to the secreted. The protein localises to the host membrane. Functionally, component of the type III secretion system (T3SS), also called injectisome, which is used to inject bacterial effector proteins into eukaryotic host cells. YopB/SctE and YopD/SctB are inserted into the host membrane where they form a pore and allow the translocation of effector proteins into the cytosol of target cells. Is an essential virulence determinant. Required for YopE and YopH translocation. Shows membrane disruptive activity in vitro. In terms of biological role, interaction with the host cell triggers a signaling response, via activation of the small GTPase Ras, the MAPK kinases ERK and JNK and the nuclear factor NF-kappa-B pathways, and production of the proinflammatory cytokine interleukin-8 (IL-8). YopB/SctE-dependent signaling response is counteracted by YopE, YopH and YopJ in infected host cells. YopB/SctE is directly responsible for signaling and its insertion in the membrane is important to activate the signaling response in the host cell. The chain is Type 3 secretion system translocon protein SctE from Yersinia pseudotuberculosis serotype I (strain IP32953).